Here is a 398-residue protein sequence, read N- to C-terminus: Cytochrome b (398 aa).

A helical membrane pass occupies residues 45-65; sequence LGSIAGIALVIQIITGVILAM. Heme b is bound by residues His95 and His109. Transmembrane regions (helical) follow at residues 97 to 117, 129 to 149, 164 to 184, 192 to 212, 245 to 265, 304 to 324, 335 to 355, and 364 to 384; these read VGASMFFATIYLHIARGLYYG, IGIIIFLIMMATAFMGYVLPW, FSAIPLIGEPIVIWLCGGFSV, FFSLHYLFPFIIVALVILHLL, FVGFGVYFIIFAYFIFYEPNY, LAGVFLMFGSIFVLFLLPWLD, PIYRIAFWIFMADCLFLGYLG, and IIISRFSACYYFCHFLVVLPL. Heme b is bound by residues His196 and His210.

It belongs to the cytochrome b family. As to quaternary structure, the main subunits of complex b-c1 are: cytochrome b, cytochrome c1 and the Rieske protein. Requires heme b as cofactor.

The protein resides in the cell membrane. In terms of biological role, component of the ubiquinol-cytochrome c reductase complex (complex III or cytochrome b-c1 complex), which is a respiratory chain that generates an electrochemical potential coupled to ATP synthesis. In Rickettsia typhi (strain ATCC VR-144 / Wilmington), this protein is Cytochrome b (petB).